The primary structure comprises 101 residues: Small ribosomal subunit protein uS14 (101 aa).

This sequence belongs to the universal ribosomal protein uS14 family. Part of the 30S ribosomal subunit. Contacts proteins S3 and S10.

In terms of biological role, binds 16S rRNA, required for the assembly of 30S particles and may also be responsible for determining the conformation of the 16S rRNA at the A site. In Colwellia psychrerythraea (strain 34H / ATCC BAA-681) (Vibrio psychroerythus), this protein is Small ribosomal subunit protein uS14.